The primary structure comprises 2013 residues: Centrosomal protein 224 (2013 aa).

5 HEAT repeats span residues 115–153 (TIEADSAEPVVEALLKGTSSTSPKILLASLAALTQALKT), 158–196 (QIPVKLILKQFSPWFENRDKGIRDQASELFIEIYRWIGK), 200–238 (PLISEALTPIQLKALQDQFEKLPTDPAVPLKYTRSEAAK), 348–386 (TSYVKPFITPILEKFKEKKTSVLQSVHTTMDSLVGKSIS), and 427–465 (TKVTKQLTKIFMEALNDTDSNIRDNASKAFAALGGIIGE). The interval 512–557 (PVSSSNKKPAAATGNSKSSSTTTPTGRSSNSSPLPPPPSSSDDIKN) is disordered. Over residues 524 to 543 (TGNSKSSSTTTPTGRSSNSS) the composition is skewed to low complexity. HEAT repeat units lie at residues 724–762 (IQQLKPLLDYTKQCLESTNPDVKKSAIKLLCTIKINIGA), 816–854 (VDISVKLTPAIITNLSDANWKTRSDALDEIERIIIDANR), 857–895 (QPKLGGLIPALKNRLTDNNQKCTITTLNIIGMLSQAMGG), 899–937 (EKHARLLIPGILLLLGDSKKPVRDAVISCMNVIVQSDLG), and 977–1015 (PSEINTLAKGIISCLQDKSAEIRSLADNLLSILCTQIPL). The interval 1043 to 1109 (KTGQPIPPPS…QQQQRRSILQ (67 aa)) is disordered. A compositionally biased stretch (low complexity) spans 1053–1106 (KTKQSTSSSSSSSSTTSQQSSTPSSPQPIRQQQQQQQQQPTQPQQQQQQQQRRS). 3 HEAT repeats span residues 1240–1279 (EYEASCLVPILLEKSGSATNEQIKQIFKQSIQQLEELCLP), 1281–1314 (VLFRFAIEMVTSQNWRTRVEVLNVMASIIDKNGA), and 1317–1353 (CGNLKVVIPLITQNLNDSQSKQSSLLCLNKLYSHIKD). 3 stretches are compositionally biased toward low complexity: residues 1372–1406 (NNNNNNNNNNNNNNNNNNNNVQQQQQQQQQQQQQQ), 1695–1735 (NRIS…INSS), and 1746–1796 (SNNT…TLST). 4 disordered regions span residues 1372–1413 (NNNN…SLST), 1695–1809 (NRIS…YSGK), 1905–1949 (NQPS…IAPQ), and 1966–1995 (TLNPDQNSGSNNNNSHQNSPSTSSSNDLNS). The span at 1799-1809 (INKEPRDYSGK) shows a compositional bias: basic and acidic residues. A compositionally biased stretch (low complexity) spans 1913-1939 (NNNNNNNNNNNNNNNNNINNNNNNNNN). A compositionally biased stretch (polar residues) spans 1940–1949 (SGGNENIAPQ). Over residues 1967–1995 (LNPDQNSGSNNNNSHQNSPSTSSSNDLNS) the composition is skewed to low complexity.

Belongs to the TOG/XMAP215 family. In terms of assembly, interacts with eb1 at the microtubule tip, centrosome and kinetochore. Interacts with lis1 in the cortical attachment of microtubules.

It is found in the cytoplasm. It localises to the cytoskeleton. The protein localises to the microtubule organizing center. The protein resides in the centrosome. Its subcellular location is the chromosome. It is found in the centromere. It localises to the kinetochore. Involved in regulation of microtubule dynamics. Regulates the interaction of microtubules tips with the centrosome and cell cortex. The protein is Centrosomal protein 224 (mtaA) of Dictyostelium discoideum (Social amoeba).